Reading from the N-terminus, the 102-residue chain is Large ribosomal subunit protein bL21 (102 aa).

It belongs to the bacterial ribosomal protein bL21 family. Part of the 50S ribosomal subunit. Contacts protein L20.

Its function is as follows. This protein binds to 23S rRNA in the presence of protein L20. The chain is Large ribosomal subunit protein bL21 from Lactiplantibacillus plantarum (strain ATCC BAA-793 / NCIMB 8826 / WCFS1) (Lactobacillus plantarum).